The sequence spans 610 residues: Sulfite reductase [NADPH] flavoprotein alpha-component (610 aa).

Residues Ile-68–Val-206 enclose the Flavodoxin-like domain. Residues Ser-74–Ala-79, Ser-121–Gly-124, and Leu-157–Ala-166 contribute to the FMN site. Residues Glu-243–Pro-459 enclose the FAD-binding FR-type domain. Residues Thr-331, Ser-365, Arg-397–Ser-400, Thr-415–Ser-417, Tyr-421, and Gly-430–Ser-433 each bind FAD. NADP(+)-binding positions include Ser-530 to Arg-531, Lys-536 to Gln-540, and Asp-572. Tyr-610 serves as a coordination point for FAD.

This sequence belongs to the NADPH-dependent sulphite reductase flavoprotein subunit CysJ family. The protein in the N-terminal section; belongs to the flavodoxin family. It in the C-terminal section; belongs to the flavoprotein pyridine nucleotide cytochrome reductase family. In terms of assembly, alpha(8)-beta(8). The alpha component is a flavoprotein, the beta component is a hemoprotein. Requires FAD as cofactor. It depends on FMN as a cofactor.

It catalyses the reaction hydrogen sulfide + 3 NADP(+) + 3 H2O = sulfite + 3 NADPH + 4 H(+). Its pathway is sulfur metabolism; hydrogen sulfide biosynthesis; hydrogen sulfide from sulfite (NADPH route): step 1/1. In terms of biological role, component of the sulfite reductase complex that catalyzes the 6-electron reduction of sulfite to sulfide. This is one of several activities required for the biosynthesis of L-cysteine from sulfate. The flavoprotein component catalyzes the electron flow from NADPH -&gt; FAD -&gt; FMN to the hemoprotein component. In Blochmanniella floridana, this protein is Sulfite reductase [NADPH] flavoprotein alpha-component.